A 358-amino-acid polypeptide reads, in one-letter code: Src kinase-associated phosphoprotein 2 (358 aa).

2 positions are modified to phosphoserine: Ser5 and Ser6. Residues 62-88 (ESQDKGDAEDGEEYDDPFAGPPDTISL) are disordered. Phosphotyrosine is present on Tyr75. Residues Ser87 and Ser90 each carry the phosphoserine modification. The PH domain occupies 116-219 (FVLKAGYLEK…WVQQLNFVLQ (104 aa)). Phosphotyrosine occurs at positions 151 and 197. Ser223 is modified (phosphoserine). Residues 232 to 254 (ERGELYDDVDHPLPSSSPTRSLP) are disordered. A compositionally biased stretch (low complexity) spans 243 to 253 (PLPSSSPTRSL). Residue Tyr260 is modified to Phosphotyrosine. Phosphoserine is present on residues Ser282 and Ser285. An SH3 domain is found at 296–357 (NYANFYQGLW…PKAYVMEMYD (62 aa)).

This sequence belongs to the SKAP family. Interacts with FYB1, which is required for SKAP2 protein stability. Interacts with PTPNS1. Part of a complex consisting of SKAP2, FYB1 and PTPNS1. Part of a complex consisting of SKAP2, FYB1 and LILRB3. Interacts with LAT, GRB2, PTK2B and PRAM1. May interact with actin. May interact with FYN, HCK and LYN. Interacts with FASLG.

Its subcellular location is the cytoplasm. In terms of biological role, may be involved in B-cell and macrophage adhesion processes. In B-cells, may act by coupling the B-cell receptor (BCR) to integrin activation. May play a role in src signaling pathway. The protein is Src kinase-associated phosphoprotein 2 (SKAP2) of Bos taurus (Bovine).